A 413-amino-acid chain; its full sequence is RNA-binding protein 41 (413 aa).

Positions S225 to K247 are disordered. Positions K309–S387 constitute an RRM domain.

Its function is as follows. May bind RNA. The sequence is that of RNA-binding protein 41 (Rbm41) from Mus musculus (Mouse).